The primary structure comprises 997 residues: Translation initiation factor IF-2 (997 aa).

Residues Ser36–Arg415 form a disordered region. 2 stretches are compositionally biased toward basic and acidic residues: residues Glu45–Gly65 and Ala94–Ala107. A compositionally biased stretch (low complexity) spans Ala108–Pro126. Residues His127–Lys147 show a composition bias toward basic and acidic residues. Low complexity predominate over residues Ala151–Arg162. Basic and acidic residues predominate over residues Pro163–Pro181. Positions Val182–Glu196 are enriched in low complexity. Composition is skewed to basic and acidic residues over residues Ala197–Ala214 and Pro241–Asp252. The span at Gly300 to Arg309 shows a compositional bias: gly residues. Residues Pro316 to Gly335 show a composition bias toward pro residues. Positions Gly378–Arg388 are enriched in basic and acidic residues. Positions Asn390–Gly399 are enriched in basic residues. A tr-type G domain is found at Pro496 to Lys665. The interval Gly505–Thr512 is G1. Gly505–Thr512 contacts GTP. The tract at residues Gly530 to His534 is G2. The tract at residues Asp551–Gly554 is G3. GTP is bound by residues Asp551 to His555 and Asn605 to Asp608. Positions Asn605–Asp608 are G4. Residues Ala641–Lys643 are G5.

The protein belongs to the TRAFAC class translation factor GTPase superfamily. Classic translation factor GTPase family. IF-2 subfamily.

It is found in the cytoplasm. Its function is as follows. One of the essential components for the initiation of protein synthesis. Protects formylmethionyl-tRNA from spontaneous hydrolysis and promotes its binding to the 30S ribosomal subunits. Also involved in the hydrolysis of GTP during the formation of the 70S ribosomal complex. The chain is Translation initiation factor IF-2 from Desulfovibrio desulfuricans (strain ATCC 27774 / DSM 6949 / MB).